We begin with the raw amino-acid sequence, 398 residues long: Succinate--CoA ligase [ADP-forming] subunit beta (398 aa).

The ATP-grasp domain occupies 9 to 237 (RDLFETHGVP…AGGLDILELK (229 aa)). ATP is bound by residues Lys45, 52–54 (GRG), Ala94, and Glu99. Mg(2+) contacts are provided by Asn191 and Asp205. Residues Asn257 and 319 to 321 (GIT) contribute to the substrate site.

This sequence belongs to the succinate/malate CoA ligase beta subunit family. As to quaternary structure, heterotetramer of two alpha and two beta subunits. The cofactor is Mg(2+).

The catalysed reaction is succinate + ATP + CoA = succinyl-CoA + ADP + phosphate. It carries out the reaction GTP + succinate + CoA = succinyl-CoA + GDP + phosphate. The protein operates within carbohydrate metabolism; tricarboxylic acid cycle; succinate from succinyl-CoA (ligase route): step 1/1. In terms of biological role, succinyl-CoA synthetase functions in the citric acid cycle (TCA), coupling the hydrolysis of succinyl-CoA to the synthesis of either ATP or GTP and thus represents the only step of substrate-level phosphorylation in the TCA. The beta subunit provides nucleotide specificity of the enzyme and binds the substrate succinate, while the binding sites for coenzyme A and phosphate are found in the alpha subunit. The sequence is that of Succinate--CoA ligase [ADP-forming] subunit beta from Corynebacterium glutamicum (strain ATCC 13032 / DSM 20300 / JCM 1318 / BCRC 11384 / CCUG 27702 / LMG 3730 / NBRC 12168 / NCIMB 10025 / NRRL B-2784 / 534).